A 239-amino-acid polypeptide reads, in one-letter code: Ribonuclease 3 (239 aa).

Residues 12 to 137 (RARLETAIGY…LIAAIYLDGG (126 aa)) form the RNase III domain. Residue Glu-50 coordinates Mg(2+). Residue Asp-54 is part of the active site. Mg(2+) is bound by residues Asp-123 and Glu-126. Residue Glu-126 is part of the active site. The 70-residue stretch at 162–231 (DAKTELQEWA…AMRLLEREGV (70 aa)) folds into the DRBM domain.

This sequence belongs to the ribonuclease III family. In terms of assembly, homodimer. Mg(2+) serves as cofactor.

The protein resides in the cytoplasm. It carries out the reaction Endonucleolytic cleavage to 5'-phosphomonoester.. Its function is as follows. Digests double-stranded RNA. Involved in the processing of primary rRNA transcript to yield the immediate precursors to the large and small rRNAs (23S and 16S). Processes some mRNAs, and tRNAs when they are encoded in the rRNA operon. Processes pre-crRNA and tracrRNA of type II CRISPR loci if present in the organism. This Sinorhizobium fredii (strain NBRC 101917 / NGR234) protein is Ribonuclease 3.